The chain runs to 230 residues: Prolactin-3D1 (230 aa).

A signal peptide spans 1 to 29; it reads MQLTLTLSRASGMQLFLLVSSLLLWEKVA. 2 disulfide bridges follow: cysteine 81/cysteine 200 and cysteine 217/cysteine 225. Asparagine 109 and asparagine 158 each carry an N-linked (GlcNAc...) asparagine glycan.

Belongs to the somatotropin/prolactin family.

The protein resides in the secreted. In Rattus norvegicus (Rat), this protein is Prolactin-3D1 (Prl3d1).